The chain runs to 536 residues: Indolin-2-one monooxygenase (536 aa).

A helical membrane pass occupies residues 18–34 (GTATHALLLGVLIFLVI). Position 480 (Cys480) interacts with heme.

This sequence belongs to the cytochrome P450 family. It depends on heme as a cofactor.

It localises to the membrane. The catalysed reaction is indolin-2-one + reduced [NADPH--hemoprotein reductase] + O2 = 3-hydroxyindolin-2-one + oxidized [NADPH--hemoprotein reductase] + H2O + H(+). It participates in secondary metabolite biosynthesis; 2,4-dihydroxy-1,4-benzoxazin-3-one biosynthesis; 2,4-dihydroxy-1,4-benzoxazin-3-one from indoleglycerol phosphate: step 3/5. Catalyzes the conversion of indolin-2-one to 3-hydroxyindolin-2-one. The sequence is that of Indolin-2-one monooxygenase (CYP71C2) from Zea mays (Maize).